The primary structure comprises 36 residues: Alpha-conotoxin-like Pu1.3 (36 aa).

Positions 1–21 are excised as a propeptide; the sequence is SDGRNAGADRKGFGLISQMFK. Intrachain disulfides connect Cys-24/Cys-30 and Cys-25/Cys-36.

This sequence belongs to the conotoxin A superfamily. Expressed by the venom duct.

It is found in the secreted. Alpha-conotoxins act on postsynaptic membranes, they bind to the nicotinic acetylcholine receptors (nAChR) and thus inhibit them. The sequence is that of Alpha-conotoxin-like Pu1.3 from Conus pulicarius (Flea-bitten cone).